We begin with the raw amino-acid sequence, 241 residues long: Small ribosomal subunit protein uS3 (241 aa).

In terms of domain architecture, KH type-2 spans Ile39–Gln109. The segment at Glu214–Glu241 is disordered. Over residues Gln232–Glu241 the composition is skewed to basic and acidic residues.

This sequence belongs to the universal ribosomal protein uS3 family. As to quaternary structure, part of the 30S ribosomal subunit. Forms a tight complex with proteins S10 and S14.

Binds the lower part of the 30S subunit head. Binds mRNA in the 70S ribosome, positioning it for translation. The chain is Small ribosomal subunit protein uS3 from Rippkaea orientalis (strain PCC 8801 / RF-1) (Cyanothece sp. (strain PCC 8801)).